A 398-amino-acid polypeptide reads, in one-letter code: Proteasome-activating nucleotidase (398 aa).

The stretch at 18–59 forms a coiled coil; sequence IMYLKKRIRQLELQVRTLEADKERLERELSRLRMEMSRLRQP. Residues 183-188 and His-322 each bind ATP; that span reads GCGKTL. The interval 396 to 398 is docks into pockets in the proteasome alpha-ring to cause gate opening; the sequence is MYG.

The protein belongs to the AAA ATPase family. In terms of assembly, homohexamer. The hexameric complex has a two-ring architecture resembling a top hat that caps the 20S proteasome core at one or both ends. Upon ATP-binding, the C-terminus of PAN interacts with the alpha-rings of the proteasome core by binding to the intersubunit pockets.

The protein localises to the cytoplasm. Functionally, ATPase which is responsible for recognizing, binding, unfolding and translocation of substrate proteins into the archaeal 20S proteasome core particle. Is essential for opening the gate of the 20S proteasome via an interaction with its C-terminus, thereby allowing substrate entry and access to the site of proteolysis. Thus, the C-termini of the proteasomal ATPase function like a 'key in a lock' to induce gate opening and therefore regulate proteolysis. Unfolding activity requires energy from ATP hydrolysis, whereas ATP binding alone promotes ATPase-20S proteasome association which triggers gate opening, and supports translocation of unfolded substrates. The sequence is that of Proteasome-activating nucleotidase from Thermococcus onnurineus (strain NA1).